Here is a 225-residue protein sequence, read N- to C-terminus: Ribosomal RNA small subunit methyltransferase G (225 aa).

Residues glycine 71, leucine 76, alanine 121 to glutamate 122, and arginine 139 each bind S-adenosyl-L-methionine. The disordered stretch occupies residues valine 204–arginine 225.

Belongs to the methyltransferase superfamily. RNA methyltransferase RsmG family.

It localises to the cytoplasm. Its function is as follows. Specifically methylates the N7 position of guanine in position 518 of 16S rRNA. The polypeptide is Ribosomal RNA small subunit methyltransferase G (Mycobacterium sp. (strain JLS)).